The following is a 561-amino-acid chain: uncharacterized protein (561 aa).

The stretch at 187–217 (DDEELSEEEILNRIDKLQIELEQVIGKQKNI) forms a coiled coil.

This is an uncharacterized protein from Dictyostelium discoideum (Social amoeba).